The chain runs to 404 residues: Cysteine desulfurase IscS (404 aa).

Residues 75–76 (AT), Asn155, Gln183, and 203–205 (SAH) contribute to the pyridoxal 5'-phosphate site. Lys206 bears the N6-(pyridoxal phosphate)lysine mark. Thr243 is a binding site for pyridoxal 5'-phosphate. Cys328 acts as the Cysteine persulfide intermediate in catalysis. Cys328 contacts [2Fe-2S] cluster.

It belongs to the class-V pyridoxal-phosphate-dependent aminotransferase family. NifS/IscS subfamily. As to quaternary structure, homodimer. Forms a heterotetramer with IscU, interacts with other sulfur acceptors. It depends on pyridoxal 5'-phosphate as a cofactor.

It localises to the cytoplasm. It catalyses the reaction (sulfur carrier)-H + L-cysteine = (sulfur carrier)-SH + L-alanine. Its pathway is cofactor biosynthesis; iron-sulfur cluster biosynthesis. In terms of biological role, master enzyme that delivers sulfur to a number of partners involved in Fe-S cluster assembly, tRNA modification or cofactor biosynthesis. Catalyzes the removal of elemental sulfur atoms from cysteine to produce alanine. Functions as a sulfur delivery protein for Fe-S cluster synthesis onto IscU, an Fe-S scaffold assembly protein, as well as other S acceptor proteins. The protein is Cysteine desulfurase IscS of Proteus mirabilis (strain HI4320).